Here is a 312-residue protein sequence, read N- to C-terminus: GDP-L-fucose synthase (312 aa).

11-17 (GGRGMVG) lines the NADP(+) pocket. Catalysis depends on Tyr136, which acts as the Proton donor/acceptor. Residues Lys140 and His179 each contribute to the NADP(+) site. 3 residues coordinate substrate: Lys187, Trp202, and Arg209.

The protein belongs to the NAD(P)-dependent epimerase/dehydratase family. Fucose synthase subfamily.

The catalysed reaction is GDP-beta-L-fucose + NADP(+) = GDP-4-dehydro-alpha-D-rhamnose + NADPH + H(+). The protein operates within nucleotide-sugar biosynthesis; GDP-L-fucose biosynthesis via de novo pathway; GDP-L-fucose from GDP-alpha-D-mannose: step 2/2. In terms of biological role, catalyzes the two-step NADP-dependent conversion of GDP-4-dehydro-6-deoxy-D-mannose to GDP-fucose, involving an epimerase and a reductase reaction. The polypeptide is GDP-L-fucose synthase (Azorhizobium caulinodans (strain ATCC 43989 / DSM 5975 / JCM 20966 / LMG 6465 / NBRC 14845 / NCIMB 13405 / ORS 571)).